A 500-amino-acid polypeptide reads, in one-letter code: Glycerol kinase (500 aa).

An ADP-binding site is contributed by T13. Positions 13, 14, and 15 each coordinate ATP. A sn-glycerol 3-phosphate-binding site is contributed by T13. R17 contacts ADP. Residues R83, E84, Y135, and D244 each contribute to the sn-glycerol 3-phosphate site. R83, E84, Y135, D244, and Q245 together coordinate glycerol. Residues T266, G309, G410, and N414 each coordinate ADP. ATP contacts are provided by T266, G309, and G410.

Belongs to the FGGY kinase family.

The catalysed reaction is glycerol + ATP = sn-glycerol 3-phosphate + ADP + H(+). The protein operates within polyol metabolism; glycerol degradation via glycerol kinase pathway; sn-glycerol 3-phosphate from glycerol: step 1/1. With respect to regulation, inhibited by fructose 1,6-bisphosphate (FBP). In terms of biological role, key enzyme in the regulation of glycerol uptake and metabolism. Catalyzes the phosphorylation of glycerol to yield sn-glycerol 3-phosphate. The polypeptide is Glycerol kinase (Chromobacterium violaceum (strain ATCC 12472 / DSM 30191 / JCM 1249 / CCUG 213 / NBRC 12614 / NCIMB 9131 / NCTC 9757 / MK)).